The chain runs to 354 residues: Guanine nucleotide-binding protein G(o) subunit alpha (354 aa).

Residue Gly-2 is the site of N-myristoyl glycine attachment. A lipid anchor (S-palmitoyl cysteine) is attached at Cys-3. Positions Lys-32–Tyr-354 constitute a G-alpha domain. Residues Lys-35–Thr-48 form a G1 motif region. The GTP site is built by Glu-43, Lys-46, Ser-47, Thr-48, Ser-152, Leu-176, Arg-177, Thr-178, and Arg-179. Residue Ser-47 coordinates Mg(2+). Positions Asp-174 to Thr-182 are G2 motif. Position 182 (Thr-182) interacts with Mg(2+). The G3 motif stretch occupies residues Phe-197 to Arg-206. Gln-205 is modified (5-glutamyl histamine). The tract at residues Ile-266 to Asp-273 is G4 motif. Residues Asn-270, Asp-273, and Cys-325 each contribute to the GTP site. Residues Thr-324–Thr-329 are G5 motif. Asn-346 carries the deamidated asparagine; in form Alpha-3 modification. Cys-351 is lipidated: S-palmitoyl cysteine.

It belongs to the G-alpha family. G(i/o/t/z) subfamily. In terms of assembly, g proteins are composed of 3 units; alpha, beta and gamma. The alpha chain contains the guanine nucleotide binding site. Forms a complex with GNB1 and GNG3. Interacts with RGS14. Interacts with RGS16. Interacts with RGS19. Interacts (when palmitoylated) with ADGRG3. Deamidation of Asn-346 converts alpha-1 to alpha-3. Post-translationally, histaminylated at Gln-205 residues by TGM2.

The protein localises to the cell membrane. It localises to the membrane. It carries out the reaction GTP + H2O = GDP + phosphate + H(+). Its activity is regulated as follows. The GTPase activity is promoted by GTPAse activators, such as RGS14, RGS16 and RGS19. Its function is as follows. Guanine nucleotide-binding proteins (G proteins) function as transducers downstream of G protein-coupled receptors (GPCRs) in numerous signaling cascades. The alpha chain contains the guanine nucleotide binding site and alternates between an active, GTP-bound state and an inactive, GDP-bound state. Signaling by an activated GPCR promotes GDP release and GTP binding. The alpha subunit has a low GTPase activity that converts bound GTP to GDP, thereby terminating the signal. Both GDP release and GTP hydrolysis are modulated by numerous regulatory proteins. Signaling is mediated via effector proteins, such as adenylate cyclase. Inhibits adenylate cyclase activity, leading to decreased intracellular cAMP levels. The protein is Guanine nucleotide-binding protein G(o) subunit alpha (GNAO1) of Cricetulus longicaudatus (Long-tailed dwarf hamster).